A 28-amino-acid chain; its full sequence is Cruzioseptin-3 (28 aa).

Gln25 is modified (glutamine amide). The propeptide occupies 27-28; sequence EQ.

As to expression, expressed by the skin glands.

It is found in the secreted. Its function is as follows. Has antimicrobial activity against Gram-negative bacterium E.coli (MIC=13.32 uM), against Gram-positive bacterium S.aureus (MIC=13.32 uM) and against fungus C.albicans (MIC=13.32 uM). At higher concentrations also has a bactericidal and fungicidal effect. Has hemagglutinating activity against horse erythrocytes. The polypeptide is Cruzioseptin-3 (Cruziohyla calcarifer (Splendid leaf frog)).